The sequence spans 259 residues: Type III pantothenate kinase (259 aa).

An ATP-binding site is contributed by 6 to 13; it reads DCGNTNTL. 108–111 contacts substrate; it reads GADR. The active-site Proton acceptor is the Asp-110. Asp-130 contacts K(+). Residue Thr-133 coordinates ATP. Residue Thr-185 coordinates substrate.

This sequence belongs to the type III pantothenate kinase family. Homodimer. The cofactor is NH4(+). K(+) is required as a cofactor.

It is found in the cytoplasm. The enzyme catalyses (R)-pantothenate + ATP = (R)-4'-phosphopantothenate + ADP + H(+). Its pathway is cofactor biosynthesis; coenzyme A biosynthesis; CoA from (R)-pantothenate: step 1/5. In terms of biological role, catalyzes the phosphorylation of pantothenate (Pan), the first step in CoA biosynthesis. The polypeptide is Type III pantothenate kinase (Maricaulis maris (strain MCS10) (Caulobacter maris)).